Consider the following 276-residue polypeptide: Protein TabB (276 aa).

It belongs to the transferase hexapeptide repeat family. It depends on pyridoxal 5'-phosphate as a cofactor.

This is Protein TabB (tabB) from Pseudomonas amygdali pv. tabaci (Pseudomonas syringae pv. tabaci).